The primary structure comprises 89 residues: MANKSKLAKQKQREKTVEKYAAKRAELKAAGDYYGLTQLPRDASPTRLHNRCEFTGRPRGYVRFFGVSRIVLREMAHRGELPGVKKASW.

It belongs to the universal ribosomal protein uS14 family. Part of the 30S ribosomal subunit. Contacts proteins S3 and S10.

Functionally, binds 16S rRNA, required for the assembly of 30S particles and may also be responsible for determining the conformation of the 16S rRNA at the A site. The polypeptide is Small ribosomal subunit protein uS14 (Deinococcus radiodurans (strain ATCC 13939 / DSM 20539 / JCM 16871 / CCUG 27074 / LMG 4051 / NBRC 15346 / NCIMB 9279 / VKM B-1422 / R1)).